We begin with the raw amino-acid sequence, 162 residues long: Glutathione peroxidase-like peroxiredoxin 2 (162 aa).

The active-site Cysteine sulfenic acid (-SOH) intermediate is C37. Cysteines 37 and 83 form a disulfide.

The protein belongs to the glutathione peroxidase family. As to quaternary structure, monomer.

It localises to the cytoplasm. The protein localises to the nucleus. It is found in the mitochondrion outer membrane. Its subcellular location is the mitochondrion inner membrane. The catalysed reaction is a hydroperoxide + [thioredoxin]-dithiol = an alcohol + [thioredoxin]-disulfide + H2O. Glutathione peroxidase-like protein that protects cells from phospholipid hydroperoxides and nonphospholipid peroxides during oxidative stress. Plays an important role in the oxidative stress-induced response in the presence of Ca(2+). Has peroxidase activity using preferentially thioredoxin as a reducing power. The redox state of the mitochondrial GPX2 is regulated by TRX1 and TRX2 (cytoplasmic thioredoxin), and by TRX3 (mitochondrial matrix thioredoxin). Involved in sporulation. The polypeptide is Glutathione peroxidase-like peroxiredoxin 2 (Saccharomyces cerevisiae (strain ATCC 204508 / S288c) (Baker's yeast)).